Here is a 362-residue protein sequence, read N- to C-terminus: Holliday junction branch migration complex subunit RuvB (362 aa).

The tract at residues 1 to 20 is disordered; that stretch reads MKRTIMTNTDTFEQPNTGAN. Residues 15 to 203 form a large ATPase domain (RuvB-L) region; sequence PNTGANEESL…FGFTAHLDFY (189 aa). Residues L42, R43, G84, K87, T88, T89, 150 to 152, R193, Y203, and R240 each bind ATP; that span reads EDF. A Mg(2+)-binding site is contributed by T88. The interval 204–274 is small ATPAse domain (RuvB-S); the sequence is PHEELEKLIE…DVKEALALYQ (71 aa). Residues 277–362 are head domain (RuvB-H); sequence TEGLDRLDIA…ESAYDVNEMS (86 aa). DNA contacts are provided by R332 and R337.

This sequence belongs to the RuvB family. Homohexamer. Forms an RuvA(8)-RuvB(12)-Holliday junction (HJ) complex. HJ DNA is sandwiched between 2 RuvA tetramers; dsDNA enters through RuvA and exits via RuvB. An RuvB hexamer assembles on each DNA strand where it exits the tetramer. Each RuvB hexamer is contacted by two RuvA subunits (via domain III) on 2 adjacent RuvB subunits; this complex drives branch migration. In the full resolvosome a probable DNA-RuvA(4)-RuvB(12)-RuvC(2) complex forms which resolves the HJ.

The protein localises to the cytoplasm. It catalyses the reaction ATP + H2O = ADP + phosphate + H(+). The RuvA-RuvB-RuvC complex processes Holliday junction (HJ) DNA during genetic recombination and DNA repair, while the RuvA-RuvB complex plays an important role in the rescue of blocked DNA replication forks via replication fork reversal (RFR). RuvA specifically binds to HJ cruciform DNA, conferring on it an open structure. The RuvB hexamer acts as an ATP-dependent pump, pulling dsDNA into and through the RuvAB complex. RuvB forms 2 homohexamers on either side of HJ DNA bound by 1 or 2 RuvA tetramers; 4 subunits per hexamer contact DNA at a time. Coordinated motions by a converter formed by DNA-disengaged RuvB subunits stimulates ATP hydrolysis and nucleotide exchange. Immobilization of the converter enables RuvB to convert the ATP-contained energy into a lever motion, pulling 2 nucleotides of DNA out of the RuvA tetramer per ATP hydrolyzed, thus driving DNA branch migration. The RuvB motors rotate together with the DNA substrate, which together with the progressing nucleotide cycle form the mechanistic basis for DNA recombination by continuous HJ branch migration. Branch migration allows RuvC to scan DNA until it finds its consensus sequence, where it cleaves and resolves cruciform DNA. The protein is Holliday junction branch migration complex subunit RuvB of Bifidobacterium adolescentis (strain ATCC 15703 / DSM 20083 / NCTC 11814 / E194a).